A 199-amino-acid chain; its full sequence is MQQKQMNIELRSKTGKGISRKLRSADMVPGVVYGKGMDPMAVSINYRELQAAMAGEGGQNNLITLVGGGSLDQSMAIVADLQRDAVKGTYKHVDLHRVNMSEKLRVTVPVVLKGTAIGVKEGGLLDFAHHELHVECLPGNIPDHIEIDVTSLAVAHSIHVGEIALPEGVKVLDNPKTPVVSVLGRVKEEAEAAAEAAEA.

The protein belongs to the bacterial ribosomal protein bL25 family. CTC subfamily. In terms of assembly, part of the 50S ribosomal subunit; part of the 5S rRNA/L5/L18/L25 subcomplex. Contacts the 5S rRNA. Binds to the 5S rRNA independently of L5 and L18.

This is one of the proteins that binds to the 5S RNA in the ribosome where it forms part of the central protuberance. This is Large ribosomal subunit protein bL25 from Pelobacter propionicus (strain DSM 2379 / NBRC 103807 / OttBd1).